The chain runs to 257 residues: Sad1-interacting factor 1 (257 aa).

The disordered stretch occupies residues 16–68 (LNKIKQGGASRINQILGQNSDDSQSDVRATASEEAVHSETATPVTPMSSGFME). Polar residues-rich tracts occupy residues 26–37 (RINQILGQNSDD) and 54–63 (ETATPVTPMS). The residue at position 35 (serine 35) is a Phosphoserine. A Phosphoserine modification is found at serine 132. Residue threonine 134 is modified to Phosphothreonine. A run of 2 helical transmembrane segments spans residues 160 to 180 (LLAI…LLPW) and 231 to 251 (FTQL…CCYF).

Interacts with kms1 and sad1.

It localises to the membrane. The chain is Sad1-interacting factor 1 (sif1) from Schizosaccharomyces pombe (strain 972 / ATCC 24843) (Fission yeast).